We begin with the raw amino-acid sequence, 299 residues long: Serine/threonine-protein kinase 1 (299 aa).

One can recognise a Protein kinase domain in the interval 39–277 (IATKPMFEGG…FKGLVSHPWF (239 aa)). Residues 45–53 (FEGGRRNNV) and Lys66 each bind ATP. Catalysis depends on Asp153, which acts as the Proton acceptor.

It belongs to the protein kinase superfamily. Ser/Thr protein kinase family.

The protein localises to the virion. It is found in the host cytoplasm. It catalyses the reaction L-seryl-[protein] + ATP = O-phospho-L-seryl-[protein] + ADP + H(+). The enzyme catalyses L-threonyl-[protein] + ATP = O-phospho-L-threonyl-[protein] + ADP + H(+). Its function is as follows. Essential for viral replication. It may mediate the virus progression through DNA replication. The polypeptide is Serine/threonine-protein kinase 1 (African swine fever virus (isolate Tick/Malawi/Lil 20-1/1983) (ASFV)).